An 82-amino-acid chain; its full sequence is MAKSCSALNFNEMSEGVCKYVLGVQQYLTELETSTQGTVDLGTMFNLQYRTQILCQYMEASSNILTAVHTEMITMARSAKGS.

It belongs to the chlamydial CPn_0710/CT_666/TC_0037 family.

This is an uncharacterized protein from Chlamydia muridarum (strain MoPn / Nigg).